The chain runs to 136 residues: Protein YebF (136 aa).

The first 23 residues, 1–23 (MKKTGLALVLATILLGMMGSVHA), serve as a signal peptide directing secretion. Residues 30–117 (KVPACIGLNQ…KSGTMTYTGL (88 aa)) form the YebF/Cmi domain. Cysteines 34 and 107 form a disulfide. Residues 117 to 136 (LNAQTRPDPQIGLNSQAGPK) are disordered.

It belongs to the YebF family.

It localises to the secreted. This Yersinia pseudotuberculosis serotype O:1b (strain IP 31758) protein is Protein YebF.